A 125-amino-acid polypeptide reads, in one-letter code: UPF0102 protein ABO_0585 (125 aa).

It belongs to the UPF0102 family.

The protein is UPF0102 protein ABO_0585 of Alcanivorax borkumensis (strain ATCC 700651 / DSM 11573 / NCIMB 13689 / SK2).